Reading from the N-terminus, the 315-residue chain is Homoserine O-succinyltransferase (315 aa).

Cys142 (acyl-thioester intermediate) is an active-site residue. Positions 163 and 192 each coordinate substrate. The active-site Proton acceptor is His235. Glu237 is an active-site residue. Arg249 serves as a coordination point for substrate.

It belongs to the MetA family.

Its subcellular location is the cytoplasm. It carries out the reaction L-homoserine + succinyl-CoA = O-succinyl-L-homoserine + CoA. It participates in amino-acid biosynthesis; L-methionine biosynthesis via de novo pathway; O-succinyl-L-homoserine from L-homoserine: step 1/1. Functionally, transfers a succinyl group from succinyl-CoA to L-homoserine, forming succinyl-L-homoserine. The protein is Homoserine O-succinyltransferase of Tolumonas auensis (strain DSM 9187 / NBRC 110442 / TA 4).